An 845-amino-acid polypeptide reads, in one-letter code: Beta-glucosidase B (845 aa).

N-linked (GlcNAc...) asparagine glycosylation is present at Asn-202. Asp-230 is a catalytic residue. N-linked (GlcNAc...) asparagine glycosylation occurs at Asn-235. The PA14 domain maps to 406–557 (EGQPGWTLDF…HNRDLLSEAV (152 aa)). N-linked (GlcNAc...) asparagine glycosylation is found at Asn-591, Asn-612, and Asn-794.

It belongs to the glycosyl hydrolase 3 family.

The catalysed reaction is Hydrolysis of terminal, non-reducing beta-D-glucosyl residues with release of beta-D-glucose.. The protein operates within glycan metabolism; cellulose degradation. Beta-glucosidases are one of a number of cellulolytic enzymes involved in the degradation of cellulosic biomass. Catalyzes the last step releasing glucose from the inhibitory cellobiose. The polypeptide is Beta-glucosidase B (bglB) (Emericella nidulans (strain FGSC A4 / ATCC 38163 / CBS 112.46 / NRRL 194 / M139) (Aspergillus nidulans)).